Reading from the N-terminus, the 217-residue chain is Uridylate kinase (217 aa).

Residue 6–10 (KISGR) coordinates ATP. Residue Gly38 participates in UMP binding. ATP-binding residues include Gly39 and Arg43. UMP contacts are provided by residues Asp60 and 107–113 (FQPGQST). The ATP site is built by Asn134, Tyr139, and Asp142.

The protein belongs to the UMP kinase family. In terms of assembly, homohexamer.

The protein localises to the cytoplasm. It carries out the reaction UMP + ATP = UDP + ADP. It participates in pyrimidine metabolism; CTP biosynthesis via de novo pathway; UDP from UMP (UMPK route): step 1/1. Inhibited by UTP. Its function is as follows. Catalyzes the reversible phosphorylation of UMP to UDP. The sequence is that of Uridylate kinase from Pyrobaculum arsenaticum (strain DSM 13514 / JCM 11321 / PZ6).